The sequence spans 583 residues: Phosphoglucomutase, cytoplasmic (583 aa).

The tract at residues 1–20 is disordered; that stretch reads MATFKVSRVETKPYDGQKPG. The alpha-D-glucose 1,6-bisphosphate site is built by arginine 25 and serine 124. The active-site Phosphoserine intermediate is the serine 124. Residues serine 124, aspartate 300, aspartate 302, and aspartate 304 each coordinate Mg(2+). A Phosphoserine modification is found at serine 124. The alpha-D-glucose 1,6-bisphosphate site is built by aspartate 304, arginine 305, threonine 368, glutamate 387, serine 389, and lysine 400.

Belongs to the phosphohexose mutase family. In terms of assembly, monomer. Mg(2+) serves as cofactor.

It localises to the cytoplasm. The catalysed reaction is alpha-D-glucose 1-phosphate = alpha-D-glucose 6-phosphate. The enzyme catalyses O-phospho-L-seryl-[protein] + alpha-D-glucose 1-phosphate = alpha-D-glucose 1,6-bisphosphate + L-seryl-[protein]. It catalyses the reaction alpha-D-glucose 1,6-bisphosphate + L-seryl-[protein] = O-phospho-L-seryl-[protein] + alpha-D-glucose 6-phosphate. Functionally, catalyzes the reversible isomerization of alpha-D-glucose 1-phosphate to alpha-D-glucose 6-phosphate. The mechanism proceeds via the intermediate compound alpha-D-glucose 1,6-bisphosphate. This enzyme participates in both the breakdown and synthesis of glucose. This Mesembryanthemum crystallinum (Common ice plant) protein is Phosphoglucomutase, cytoplasmic (PGM1).